The primary structure comprises 151 residues: Linear element protein Mug20 (151 aa).

The stretch at 56 to 140 forms a coiled coil; it reads EEKLRALDKL…CAMEKLKMIE (85 aa).

Component of linear elements (LinEs), which are similar to synaptonemal complexes, at least composed of rec27, rec25, rec10 and mug20. Interacts with rec10.

It is found in the cytoplasm. The protein localises to the nucleus. Its subcellular location is the chromosome. Functionally, during meiotic DNA recombination, binds to and may help activate DNA double-strand break (DSB) hotspot sites. In Schizosaccharomyces pombe (strain 972 / ATCC 24843) (Fission yeast), this protein is Linear element protein Mug20.